The sequence spans 2273 residues: Acetyl-CoA carboxylase, mitochondrial (2273 aa).

Residues 1–104 (KGKTITHGQS…RGNIHKHTRL (104 aa)) constitute a mitochondrion transit peptide. A Biotin carboxylation domain is found at 134-635 (VISKILIANN…STGWLDDLIL (502 aa)). The ATP-grasp domain occupies 292–484 (KTNFVSVPDD…LPATQLQIAM (193 aa)). 332-337 (GGGGKG) lines the ATP pocket. The active site involves arginine 459. Residues 763–837 (LEAELNPTQV…EAGDVIAKLT (75 aa)) enclose the Biotinyl-binding domain. N6-biotinyllysine is present on lysine 804. In terms of domain architecture, CoA carboxyltransferase N-terminal spans 1532–1867 (PYSVKDWLQP…KRDMSPPLLE (336 aa)). The tract at residues 1532-2187 (PYSVKDWLQP…EGQVIKRLQK (656 aa)) is carboxyltransferase. Arginine 1776, lysine 2080, and arginine 2082 together coordinate CoA. The 317-residue stretch at 1871 to 2187 (RWDRDVDFKP…EGQVIKRLQK (317 aa)) folds into the CoA carboxyltransferase C-terminal domain.

Biotin is required as a cofactor.

It localises to the mitochondrion. It catalyses the reaction hydrogencarbonate + acetyl-CoA + ATP = malonyl-CoA + ADP + phosphate + H(+). It carries out the reaction N(6)-biotinyl-L-lysyl-[protein] + hydrogencarbonate + ATP = N(6)-carboxybiotinyl-L-lysyl-[protein] + ADP + phosphate + H(+). It functions in the pathway lipid metabolism; malonyl-CoA biosynthesis; malonyl-CoA from acetyl-CoA: step 1/1. Catalyzes the rate-limiting reaction in the mitochondrial fatty acid synthesis (FAS) type II pathway. Responsible for the production of the mitochondrial malonyl-CoA, used for the biosynthesis of the cofactor lipoic acid. This protein carries three functions: biotin carboxyl carrier protein, biotin carboxylase, and carboxyltransferase. The chain is Acetyl-CoA carboxylase, mitochondrial (HFA1) from Saccharomyces cerevisiae (strain ATCC 204508 / S288c) (Baker's yeast).